Here is a 61-residue protein sequence, read N- to C-terminus: MAVPKRKTSPSKRGMRRSADALKASTYVEDKNSGELRRPHHIDLKTGMYRGRQVLTPKESA.

Basic residues predominate over residues 1-16 (MAVPKRKTSPSKRGMR). The segment at 1–41 (MAVPKRKTSPSKRGMRRSADALKASTYVEDKNSGELRRPHH) is disordered. The segment covering 28-41 (VEDKNSGELRRPHH) has biased composition (basic and acidic residues).

The protein belongs to the bacterial ribosomal protein bL32 family.

The sequence is that of Large ribosomal subunit protein bL32 from Rhizobium rhizogenes (strain K84 / ATCC BAA-868) (Agrobacterium radiobacter).